A 406-amino-acid chain; its full sequence is MIVQPKVRGFICTTAHPEGCARHVGEWINYAKQEPSLTGGPQKVLIIGASTGFGLASRIVAAFGAGAKTIGVFFERPASGKRTASPGWYNTAAFEKTALAAGLYAKSINGDAFSDEIKQQTIDLIQKDWQGGVDLVIYSIASPRRVHPRTGEIFNSVLKPIGQTYHNKTVDVMTGEVSPVSIEPATEKEIRDTEAVMGGDDWALWINALFKYNCLAEGVKTVAFTYIGPELTHAVYRNGTIGRAKLHLEKTARELDTQLESALSGQALISVNKALVTQASAAIPVVPLYISLLYKIMKEKNIHEGCIEQMWRLFKERLYSNQNIPTDSEGRIRIDDWEMREDVQAEIKRLWESINTGNVETVSDIAGYREDFYKLFGFGLNGIDYERGVEIEKAIPSITVTPENPE.

NAD(+) contacts are provided by residues 48–53, 74–75, 111–112, and 140–141; these read GASTGF, FE, DA, and IA. Y226 contributes to the substrate binding site. Catalysis depends on Y236, which acts as the Proton donor. Residues K245 and 275-277 each bind NAD(+); that span reads LVT.

This sequence belongs to the TER reductase family. In terms of assembly, monomer.

The catalysed reaction is a 2,3-saturated acyl-[ACP] + NAD(+) = a (2E)-enoyl-[ACP] + NADH + H(+). The protein operates within lipid metabolism; fatty acid biosynthesis. In terms of biological role, involved in the final reduction of the elongation cycle of fatty acid synthesis (FAS II). Catalyzes the reduction of a carbon-carbon double bond in an enoyl moiety that is covalently linked to an acyl carrier protein (ACP). The chain is Enoyl-[acyl-carrier-protein] reductase [NADH] from Coxiella burnetii (strain RSA 331 / Henzerling II).